The sequence spans 340 residues: Melanin-concentrating hormone receptor 2 (340 aa).

Residues 1-34 (MNPFHSSCWNTSAELSNKSWNKEFAYQTASAVDT) lie on the Extracellular side of the membrane. Residues asparagine 10 and asparagine 17 are each glycosylated (N-linked (GlcNAc...) asparagine). A helical transmembrane segment spans residues 35–57 (VILPSMIGIICSTGLVGNILIVF). Residues 58-69 (TIIRSRKKTVPD) are Cytoplasmic-facing. The helical transmembrane segment at 70–92 (IYICNLAVADLVHIIGMPFLIHQ) threads the bilayer. Residues 93–106 (WARGGEWVFGGPLC) lie on the Extracellular side of the membrane. Residues 107-129 (TIITSLDTCNQFACSAIMTVMSV) form a helical membrane-spanning segment. Residues 130 to 149 (DRYFALVQPFRLTSWRTRYK) lie on the Cytoplasmic side of the membrane. The helical transmembrane segment at 150 to 172 (TIRINLGLWAASFILALPVWIYS) threads the bilayer. Residues 173-198 (KVIKFKDGVESCAFDLTSPDDVLWYT) are Extracellular-facing. The chain crosses the membrane as a helical span at residues 199-221 (LYLTITTFFFPLPLILVCYILIL). Over 222 to 252 (CYTWEMYQQNKDARCCNPSVPKQRVMKLTKM) the chain is Cytoplasmic. A helical membrane pass occupies residues 253-272 (VLVLVAVFILSAAPYHVIQL). The Extracellular segment spans residues 273-286 (VNLQMEQPTLAFYV). The helical transmembrane segment at 287-309 (GYYLSICLSYASSSINPFLYILL) threads the bilayer. The Cytoplasmic portion of the chain corresponds to 310–340 (SGNFQKRLPQIQRRVTDKEIKNMGNTLKSHF).

The protein belongs to the G-protein coupled receptor 1 family.

Its subcellular location is the cell membrane. In terms of biological role, receptor for melanin-concentrating hormone, coupled to G proteins that activate phosphoinositide hydrolysis. This is Melanin-concentrating hormone receptor 2 (MCHR2) from Macaca fascicularis (Crab-eating macaque).